A 466-amino-acid chain; its full sequence is Argininosuccinate lyase (466 aa).

It belongs to the lyase 1 family. Argininosuccinate lyase subfamily.

Its subcellular location is the cytoplasm. The enzyme catalyses 2-(N(omega)-L-arginino)succinate = fumarate + L-arginine. It functions in the pathway amino-acid biosynthesis; L-arginine biosynthesis; L-arginine from L-ornithine and carbamoyl phosphate: step 3/3. In Brucella abortus (strain S19), this protein is Argininosuccinate lyase.